The chain runs to 299 residues: Epimerase family protein SH2119 (299 aa).

The protein belongs to the NAD(P)-dependent epimerase/dehydratase family. SDR39U1 subfamily.

This is Epimerase family protein SH2119 from Staphylococcus haemolyticus (strain JCSC1435).